The chain runs to 102 residues: MRRDQKMGEGNYPLAGHHLKQKNLLFGPLENIKTGAQIVITDFKKDYIYSVTSKDIISEMDADVVEETNKKEITLITCDKAVKTEGRLVVKGELVDSFGHTN.

The Proton donor/acceptor role is filled by His17. Catalysis depends on Cys78, which acts as the Acyl-thioester intermediate.

It belongs to the bacterial sortase family.

Seems not to play a major role if any as a sortase. The protein is Putative sortase YwpE (ywpE) of Bacillus subtilis (strain 168).